We begin with the raw amino-acid sequence, 353 residues long: Photosystem II D2 protein (353 aa).

Thr2 bears the N-acetylthreonine mark. Position 2 is a phosphothreonine (Thr2). Residues Cys41–Thr61 traverse the membrane as a helical segment. A chlorophyll a-binding site is contributed by His118. The chain crosses the membrane as a helical span at residues Gly125 to Pro141. Pheophytin a-binding residues include Gln130 and Asn143. A helical membrane pass occupies residues Val153 to Ser166. Position 198 (His198) interacts with chlorophyll a. The helical transmembrane segment at Ala208–Asp228 threads the bilayer. The a plastoquinone site is built by His215 and Phe262. His215 contacts Fe cation. Fe cation is bound at residue His269. A helical transmembrane segment spans residues Gly279–Arg295.

This sequence belongs to the reaction center PufL/M/PsbA/D family. PSII is composed of 1 copy each of membrane proteins PsbA, PsbB, PsbC, PsbD, PsbE, PsbF, PsbH, PsbI, PsbJ, PsbK, PsbL, PsbM, PsbT, PsbX, PsbY, PsbZ, Psb30/Ycf12, at least 3 peripheral proteins of the oxygen-evolving complex and a large number of cofactors. It forms dimeric complexes. The D1/D2 heterodimer binds P680, chlorophylls that are the primary electron donor of PSII, and subsequent electron acceptors. It shares a non-heme iron and each subunit binds pheophytin, quinone, additional chlorophylls, carotenoids and lipids. There is also a Cl(-1) ion associated with D1 and D2, which is required for oxygen evolution. The PSII complex binds additional chlorophylls, carotenoids and specific lipids. is required as a cofactor.

The protein resides in the plastid. Its subcellular location is the chloroplast thylakoid membrane. It catalyses the reaction 2 a plastoquinone + 4 hnu + 2 H2O = 2 a plastoquinol + O2. Its function is as follows. Photosystem II (PSII) is a light-driven water:plastoquinone oxidoreductase that uses light energy to abstract electrons from H(2)O, generating O(2) and a proton gradient subsequently used for ATP formation. It consists of a core antenna complex that captures photons, and an electron transfer chain that converts photonic excitation into a charge separation. The D1/D2 (PsbA/PsbD) reaction center heterodimer binds P680, the primary electron donor of PSII as well as several subsequent electron acceptors. D2 is needed for assembly of a stable PSII complex. This chain is Photosystem II D2 protein, found in Phaseolus vulgaris (Kidney bean).